The sequence spans 171 residues: Outer membrane lipoprotein Blc (171 aa).

The first 15 residues, 1–15, serve as a signal peptide directing secretion; it reads MRAIFLILCSVLLNG. A lipid anchor (N-palmitoyl cysteine) is attached at C16. Residue C16 is the site of S-diacylglycerol cysteine attachment.

The protein belongs to the calycin superfamily. Lipocalin family. In terms of assembly, homodimer.

The protein localises to the cell outer membrane. In terms of biological role, involved in the storage or transport of lipids necessary for membrane maintenance under stressful conditions. Displays a binding preference for lysophospholipids. The protein is Outer membrane lipoprotein Blc (blc) of Vibrio cholerae serotype O1 (strain ATCC 39315 / El Tor Inaba N16961).